A 265-amino-acid chain; its full sequence is Triosephosphate isomerase (265 aa).

A substrate-binding site is contributed by 13–15 (NWK). Residue His106 is the Electrophile of the active site. The active-site Proton acceptor is the Glu179. Substrate is bound by residues Gly185, Ser223, and 244 to 245 (GG).

The protein belongs to the triosephosphate isomerase family. In terms of assembly, homodimer.

It is found in the cytoplasm. It carries out the reaction D-glyceraldehyde 3-phosphate = dihydroxyacetone phosphate. It functions in the pathway carbohydrate biosynthesis; gluconeogenesis. The protein operates within carbohydrate degradation; glycolysis; D-glyceraldehyde 3-phosphate from glycerone phosphate: step 1/1. Involved in the gluconeogenesis. Catalyzes stereospecifically the conversion of dihydroxyacetone phosphate (DHAP) to D-glyceraldehyde-3-phosphate (G3P). The polypeptide is Triosephosphate isomerase (Acinetobacter baylyi (strain ATCC 33305 / BD413 / ADP1)).